The following is a 350-amino-acid chain: 2,5-dihydroxypyridine 5,6-dioxygenase (350 aa).

His-265, His-318, and Asp-320 together coordinate Fe cation.

Fe(2+) serves as cofactor.

The catalysed reaction is 2,5-dihydroxypyridine + O2 = N-formylmaleamate + H(+). It participates in cofactor degradation; nicotinate degradation. In terms of biological role, catalyzes the dioxygenolytic ring cleavage of 2,5-dihydroxypyridine between carbons 5 and 6 generating N-formylmaleamate in the aerobic nicotinate degradation pathway. In Pseudomonas putida (strain ATCC 47054 / DSM 6125 / CFBP 8728 / NCIMB 11950 / KT2440), this protein is 2,5-dihydroxypyridine 5,6-dioxygenase (nicX).